The chain runs to 96 residues: MKCFAQIVVLLLVIAFSHGAVITGACDRDVQCGSGTCCAASLWSRNIRFCVPLGNNGEECHPASHKVPYNGKRLSSLCPCKSGLTCSKSGEKFQCS.

An N-terminal signal peptide occupies residues 1–19; sequence MKCFAQIVVLLLVIAFSHG. Cystine bridges form between cysteine 26-cysteine 38, cysteine 32-cysteine 50, cysteine 37-cysteine 78, cysteine 60-cysteine 86, and cysteine 80-cysteine 95.

Belongs to the AVIT (prokineticin) family. As to expression, expressed by the skin glands.

It is found in the secreted. Potent agonist for both PKR1/PROKR1 and PKR2/PROKR2, and inducer of a potent and long-lasting hyperalgesia. Also potentiates capsaicin-induced TRPV1 current when tested on DRG neurons. At subnanomolar concentrations, this protein both induces potent chemotaxis of macrophages and stimulates LPS-induced production of the pro-inflammatory cytokines IL-1 and IL-12. In vivo, potently stimulates the contraction of the guinea-pig gastrointestinal (GI) smooth muscle (nanomolar concentration) and rabbit aortic rings. The sequence is that of Prokineticin Bv8-like peptide 2 from Bombina maxima (Giant fire-bellied toad).